The sequence spans 126 residues: Aspartate 1-decarboxylase (126 aa).

Serine 25 functions as the Schiff-base intermediate with substrate; via pyruvic acid in the catalytic mechanism. Residue serine 25 is modified to Pyruvic acid (Ser). Residue threonine 57 participates in substrate binding. Tyrosine 58 functions as the Proton donor in the catalytic mechanism. Substrate is bound at residue 73-75 (GAA).

This sequence belongs to the PanD family. In terms of assembly, heterooctamer of four alpha and four beta subunits. It depends on pyruvate as a cofactor. In terms of processing, is synthesized initially as an inactive proenzyme, which is activated by self-cleavage at a specific serine bond to produce a beta-subunit with a hydroxyl group at its C-terminus and an alpha-subunit with a pyruvoyl group at its N-terminus.

Its subcellular location is the cytoplasm. It catalyses the reaction L-aspartate + H(+) = beta-alanine + CO2. It participates in cofactor biosynthesis; (R)-pantothenate biosynthesis; beta-alanine from L-aspartate: step 1/1. Its function is as follows. Catalyzes the pyruvoyl-dependent decarboxylation of aspartate to produce beta-alanine. The polypeptide is Aspartate 1-decarboxylase (Psychromonas ingrahamii (strain DSM 17664 / CCUG 51855 / 37)).